A 602-amino-acid polypeptide reads, in one-letter code: Cytokine-like nuclear factor N-PAC (602 aa).

Phosphoserine occurs at positions 8 and 10. The PWWP domain maps to 22–81 (PKDLIWAKMKGFTPWPGMIVDPPLDLLSQQRRANTKCVFFFGSRNFAWIEENNIKPFEGP). Positions 162–262 (GSPDEGDGLD…ASSTPTGRRR (101 aa)) are disordered. Polar residues-rich tracts occupy residues 176–188 (ADSS…SPAV), 204–217 (AATS…SAKS), and 224–233 (SAQQSPSGPS). A phosphoserine mark is found at serine 224, serine 228, and serine 243. The interval 309–602 (RDIVPSEQTF…SSAVFVRSRF (294 aa)) is dehydrogenase domain. NAD(+) is bound by residues 319-333 (GFLG…IVKD), threonine 411, and arginine 554.

The protein belongs to the HIBADH-related family. NP60 subfamily. As to quaternary structure, binds to mononucleosomes. Interacts with male-specific lethal (MSL) histone acetyltransferase complex at least composed of mof, msl-1, msl-2 and msl-3.

It localises to the chromosome. Nucleosome-destabilizing factor that is recruited to genes during transcriptional activation and colocalizes with a subset of trimethylated 'Lys-36' histone H3 (H3K36me3)-enriched regions. Binds DNA (in vitro). Facilitates Pol II transcription through nucleosomes. Facilitates male-specific lethal (MSL) histone acetyltransferase complex targeting to active genes on the X chromosome. Stimulates the acetylation of 'Lys-56' of nucleosomal histone H3 (H3K56ac) by nej. May have oxidoreductase activity. The chain is Cytokine-like nuclear factor N-PAC from Drosophila melanogaster (Fruit fly).